The primary structure comprises 640 residues: ETV5-related protein Ets96B (640 aa).

Positions 315-375 (HADSTTTAAQ…HHGHQQAEQQ (61 aa)) are disordered. The stretch at 321 to 356 (TAAQQQQQQQEQQQQQQQQQQQQQHQQQLQQAAALH) forms a coiled coil. Residues 322-355 (AAQQQQQQQEQQQQQQQQQQQQQHQQQLQQAAAL) are compositionally biased toward low complexity. The span at 356–369 (HPHHHHSHHGHHGH) shows a compositional bias: basic residues. The ETS DNA-binding region spans 498-579 (LQLWQFLVAL…NGERYVYRFV (82 aa)). Polar residues predominate over residues 609–624 (LAKTPPTSGDSQTQSP). The segment at 609–628 (LAKTPPTSGDSQTQSPRVAK) is disordered.

Belongs to the ETS family. As to expression, in the adult brain, expressed almost exclusively in dopaminergic neurons.

It is found in the nucleus. Required in dopaminergic neurons to regulate expression of genes involved in dopamine signaling. Decreases expression of the dopamine transporter DAT and increases expression of the dopamine transporter Vmat and the tyrosine 3-monooxygenase ple which is involved in dopamine biosynthesis. Also involved in negatively regulating the expression of a group of endoplasmic reticulum proteins, the molecular chaperone Calr and the protein disulfide isomerases CaBP1 and ERp60. The protein is ETV5-related protein Ets96B of Drosophila melanogaster (Fruit fly).